Consider the following 348-residue polypeptide: Methylthioribose-1-phosphate isomerase (348 aa).

Substrate contacts are provided by residues 51–53 (RGA), Arg94, and Gln199. Asp240 acts as the Proton donor in catalysis. 250–251 (NK) is a substrate binding site.

This sequence belongs to the eIF-2B alpha/beta/delta subunits family. MtnA subfamily.

It catalyses the reaction 5-(methylsulfanyl)-alpha-D-ribose 1-phosphate = 5-(methylsulfanyl)-D-ribulose 1-phosphate. It participates in amino-acid biosynthesis; L-methionine biosynthesis via salvage pathway; L-methionine from S-methyl-5-thio-alpha-D-ribose 1-phosphate: step 1/6. Catalyzes the interconversion of methylthioribose-1-phosphate (MTR-1-P) into methylthioribulose-1-phosphate (MTRu-1-P). In Nitrosococcus oceani (strain ATCC 19707 / BCRC 17464 / JCM 30415 / NCIMB 11848 / C-107), this protein is Methylthioribose-1-phosphate isomerase.